Consider the following 219-residue polypeptide: Thiopurine S-methyltransferase (219 aa).

The S-adenosyl-L-methionine site is built by tryptophan 10, leucine 45, glutamate 66, and arginine 123.

The protein belongs to the class I-like SAM-binding methyltransferase superfamily. TPMT family.

It is found in the cytoplasm. It carries out the reaction S-adenosyl-L-methionine + a thiopurine = S-adenosyl-L-homocysteine + a thiopurine S-methylether.. This chain is Thiopurine S-methyltransferase, found in Marinobacter nauticus (strain ATCC 700491 / DSM 11845 / VT8) (Marinobacter aquaeolei).